Consider the following 149-residue polypeptide: Histidine-containing phosphotransfer protein 2 (149 aa).

The HPt domain occupies 39-144 (TPGFVSEVVT…LQLEQQIQAY (106 aa)). A Phosphohistidine modification is found at histidine 80.

Post-translationally, two-component system major event consists of a His-to-Asp phosphorelay between a sensor histidine kinase (HK) and a response regulator (RR). In plants, the His-to-Asp phosphorelay involves an additional intermediate named Histidine-containing phosphotransfer protein (HPt). This multistep phosphorelay consists of a His-Asp-His-Asp sequential transfer of a phosphate group between first a His and an Asp of the HK protein, followed by the transfer to a conserved His of the HPt protein and finally the transfer to an Asp in the receiver domain of the RR protein. In terms of tissue distribution, widely expressed.

The protein resides in the cytoplasm. It localises to the cytosol. The protein localises to the nucleus. Functions as a two-component phosphorelay mediators between cytokinin sensor histidine kinases and response regulators (B-type ARRs). Plays an important role in propagating cytokinin signal transduction through the multistep His-to-Asp phosphorelay. Functions as a positive regulator of the cytokinin signaling pathway. May play a regulatory role in salt and drought tolerance during plant development. This is Histidine-containing phosphotransfer protein 2 from Oryza sativa subsp. japonica (Rice).